We begin with the raw amino-acid sequence, 201 residues long: Large ribosomal subunit protein bL25 (201 aa).

It belongs to the bacterial ribosomal protein bL25 family. CTC subfamily. As to quaternary structure, part of the 50S ribosomal subunit; part of the 5S rRNA/L5/L18/L25 subcomplex. Contacts the 5S rRNA. Binds to the 5S rRNA independently of L5 and L18.

Its function is as follows. This is one of the proteins that binds to the 5S RNA in the ribosome where it forms part of the central protuberance. The polypeptide is Large ribosomal subunit protein bL25 (Burkholderia lata (strain ATCC 17760 / DSM 23089 / LMG 22485 / NCIMB 9086 / R18194 / 383)).